The following is a 520-amino-acid chain: MAIWRIINRSYLKYASNQLTRNYYTQVCLASSTHVVKQTTKLSSFDIPNSDICTRPSNIFQNLRFLATSAQTRKKEAEVDSDGPRLNEKITGDYVRLVSEEGHCVVSLREALRRAKELQCDLVEVQRDAKPPVCKIVKYSLELYKKAKVGKERAKAKRAEAIRPDIKEIRFTPKIEAKDLKFKSDQALKLMESGYRVKCLAVPDKDKHKELEPEKLLELLFRFTCFIGDALVESWPEADRKGAVVIVRHAKFGPPKKGGVKLMKDIDIKSARVKEESPKPDSSKAGVATVDDQEDIEKSEPRFSVEQAQPVKFQNAYAKREPSSEFSGGRDASRFEPQSPNQHVNPQRPRFSNQAPNQQPTGRFDPQSPNQPPSAPRPQFPNQQPTGRFDPQFPSQPPRPQFPNQAPNQQSTGRFNPQFPNQRPSPPQSRFPDQAPNQQPSGPSPNRHPDRQGPPPRFQNQAPNQQPTGRFEPQPPNPPRAPPRPQTRLPNETSNEQPTAPGRSSGPASGYGIFSTPKTK.

A mitochondrion-targeting transit peptide spans 1 to 66 (MAIWRIINRS…SNIFQNLRFL (66 aa)). Residues 271–282 (ARVKEESPKPDS) show a composition bias toward basic and acidic residues. A disordered region spans residues 271 to 520 (ARVKEESPKP…YGIFSTPKTK (250 aa)). Positions 336–361 (EPQSPNQHVNPQRPRFSNQAPNQQPT) are enriched in polar residues. The span at 369-379 (PNQPPSAPRPQ) shows a compositional bias: pro residues. Composition is skewed to polar residues over residues 404 to 422 (NQAPNQQSTGRFNPQFPNQ) and 458 to 468 (FQNQAPNQQPT). A compositionally biased stretch (pro residues) spans 473 to 485 (PQPPNPPRAPPRP).

This sequence belongs to the IF-3 family. Monomer.

The protein resides in the mitochondrion. In terms of biological role, IF-3 binds to the 30S ribosomal subunit and shifts the equilibrium between 70S ribosomes and their 50S and 30S subunits in favor of the free subunits, thus enhancing the availability of 30S subunits on which protein synthesis initiation begins. This is Translation initiation factor IF3-1, mitochondrial from Arabidopsis thaliana (Mouse-ear cress).